Reading from the N-terminus, the 314-residue chain is 4-diphosphocytidyl-2-C-methyl-D-erythritol kinase (314 aa).

Lys11 is an active-site residue. Residue 95 to 105 participates in ATP binding; sequence PIGAGLAGGST. Asp137 is a catalytic residue.

Belongs to the GHMP kinase family. IspE subfamily.

It carries out the reaction 4-CDP-2-C-methyl-D-erythritol + ATP = 4-CDP-2-C-methyl-D-erythritol 2-phosphate + ADP + H(+). Its pathway is isoprenoid biosynthesis; isopentenyl diphosphate biosynthesis via DXP pathway; isopentenyl diphosphate from 1-deoxy-D-xylulose 5-phosphate: step 3/6. In terms of biological role, catalyzes the phosphorylation of the position 2 hydroxy group of 4-diphosphocytidyl-2C-methyl-D-erythritol. The protein is 4-diphosphocytidyl-2-C-methyl-D-erythritol kinase of Synechococcus elongatus (strain ATCC 33912 / PCC 7942 / FACHB-805) (Anacystis nidulans R2).